Consider the following 304-residue polypeptide: m7GpppX diphosphatase (304 aa).

Substrate-binding positions include E152, K174, and 235–246 (HYLPSYYHLHVH). The short motif at 242-246 (HLHVH) is the Histidine triad motif element. Catalysis depends on H244, which acts as the Nucleophile.

The protein belongs to the HIT family.

The protein resides in the cytoplasm. Its subcellular location is the nucleus. The enzyme catalyses a 5'-end (N(7)-methyl 5'-triphosphoguanosine)-ribonucleoside in mRNA + H2O = N(7)-methyl-GMP + a 5'-end diphospho-ribonucleoside in mRNA + 2 H(+). In terms of biological role, decapping scavenger enzyme that catalyzes the cleavage of a residual cap structure following the degradation of mRNAs by the 3'-&gt;5' exosome-mediated mRNA decay pathway. Hydrolyzes cap analog structures like 7-methylguanosine nucleoside triphosphate (m7GpppG) with up to 10 nucleotide substrates (small capped oligoribonucleotides) and specifically releases 5'-phosphorylated RNA fragments and 7-methylguanosine monophosphate (m7GMP). Has no activity towards mRNA molecules longer than 25 nucleotides. May also play a role in the 5'-&gt;3 mRNA decay pathway; m7GDP, the downstream product released by the 5'-&gt;3' mRNA mediated decapping activity, may be also converted by DCS1 to m7GMP. Inhibits mRNA translation. Binds to the m7GpppG cap analog. The protein is m7GpppX diphosphatase (nhm1) of Schizosaccharomyces pombe (strain 972 / ATCC 24843) (Fission yeast).